A 321-amino-acid chain; its full sequence is Ferredoxin--NADP reductase (321 aa).

Residues Glu33, Gln41, Tyr46, Val86, Leu119, Asp277, and Ser318 each contribute to the FAD site.

The protein belongs to the ferredoxin--NADP reductase type 2 family. In terms of assembly, homodimer. FAD serves as cofactor.

It catalyses the reaction 2 reduced [2Fe-2S]-[ferredoxin] + NADP(+) + H(+) = 2 oxidized [2Fe-2S]-[ferredoxin] + NADPH. This chain is Ferredoxin--NADP reductase, found in Lactococcus lactis subsp. cremoris (strain MG1363).